Here is a 70-residue protein sequence, read N- to C-terminus: Small integral membrane protein 42 (70 aa).

The chain crosses the membrane as a helical span at residues 26–46 (LVNVLFFFTPLMTLVTLLILV).

The protein localises to the membrane. This Homo sapiens (Human) protein is Small integral membrane protein 42.